The sequence spans 110 residues: Small ribosomal subunit protein bS18 (110 aa).

Over residues 1-18 the composition is skewed to low complexity; sequence MSEATTTTTTTSAPRPGG. The tract at residues 1 to 41 is disordered; it reads MSEATTTTTTTSAPRPGGRPSGPRPDRGPGGPRKKRPFQRR. A compositionally biased stretch (basic residues) spans 32–41; it reads PRKKRPFQRR.

It belongs to the bacterial ribosomal protein bS18 family. As to quaternary structure, part of the 30S ribosomal subunit. Forms a tight heterodimer with protein bS6.

Its function is as follows. Binds as a heterodimer with protein bS6 to the central domain of the 16S rRNA, where it helps stabilize the platform of the 30S subunit. This is Small ribosomal subunit protein bS18 from Trichlorobacter lovleyi (strain ATCC BAA-1151 / DSM 17278 / SZ) (Geobacter lovleyi).